Consider the following 244-residue polypeptide: Dihydropteridine reductase (244 aa).

N-acetylalanine is present on Ala2. 14-38 (LVYGGRGALGSRCVQAFRARNWWVA) is an NADP(+) binding site. 4 positions are modified to N6-succinyllysine: Lys73, Lys79, Lys96, and Lys102. Tyr150 acts as the Proton acceptor in catalysis.

This sequence belongs to the short-chain dehydrogenases/reductases (SDR) family. Homodimer.

It catalyses the reaction 5,6,7,8-tetrahydropteridine + NAD(+) = 6,7-dihydropteridine + NADH + H(+). It carries out the reaction 5,6,7,8-tetrahydropteridine + NADP(+) = 6,7-dihydropteridine + NADPH + H(+). Catalyzes the conversion of quinonoid dihydrobiopterin into tetrahydrobiopterin. In Homo sapiens (Human), this protein is Dihydropteridine reductase (QDPR).